The primary structure comprises 184 residues: Photosystem I assembly protein Ycf4 (184 aa).

2 helical membrane-spanning segments follow: residues valine 20–serine 42 and isoleucine 57–tyrosine 79.

Belongs to the Ycf4 family.

The protein resides in the plastid. The protein localises to the chloroplast thylakoid membrane. In terms of biological role, seems to be required for the assembly of the photosystem I complex. The sequence is that of Photosystem I assembly protein Ycf4 from Adiantum capillus-veneris (Maidenhair fern).